We begin with the raw amino-acid sequence, 188 residues long: Peptide deformylase (188 aa).

Fe cation contacts are provided by cysteine 109 and histidine 152. Glutamate 153 is an active-site residue. Histidine 156 serves as a coordination point for Fe cation.

The protein belongs to the polypeptide deformylase family. Fe(2+) is required as a cofactor.

The catalysed reaction is N-terminal N-formyl-L-methionyl-[peptide] + H2O = N-terminal L-methionyl-[peptide] + formate. Removes the formyl group from the N-terminal Met of newly synthesized proteins. Requires at least a dipeptide for an efficient rate of reaction. N-terminal L-methionine is a prerequisite for activity but the enzyme has broad specificity at other positions. In Chloroflexus aggregans (strain MD-66 / DSM 9485), this protein is Peptide deformylase.